We begin with the raw amino-acid sequence, 157 residues long: Endoribonuclease YbeY (157 aa).

Positions 118, 122, and 128 each coordinate Zn(2+).

This sequence belongs to the endoribonuclease YbeY family. Zn(2+) is required as a cofactor.

The protein localises to the cytoplasm. In terms of biological role, single strand-specific metallo-endoribonuclease involved in late-stage 70S ribosome quality control and in maturation of the 3' terminus of the 16S rRNA. The chain is Endoribonuclease YbeY from Shewanella loihica (strain ATCC BAA-1088 / PV-4).